The primary structure comprises 131 residues: Small ribosomal subunit protein uS8 (131 aa).

Belongs to the universal ribosomal protein uS8 family. In terms of assembly, part of the 30S ribosomal subunit. Contacts proteins S5 and S12.

In terms of biological role, one of the primary rRNA binding proteins, it binds directly to 16S rRNA central domain where it helps coordinate assembly of the platform of the 30S subunit. The protein is Small ribosomal subunit protein uS8 of Malacoplasma penetrans (strain HF-2) (Mycoplasma penetrans).